We begin with the raw amino-acid sequence, 210 residues long: Thiamine-phosphate synthase (210 aa).

Residues 34 to 38 and Asn66 contribute to the 4-amino-2-methyl-5-(diphosphooxymethyl)pyrimidine site; that span reads QLRHK. Residues Asp67 and Asp86 each coordinate Mg(2+). A 4-amino-2-methyl-5-(diphosphooxymethyl)pyrimidine-binding site is contributed by Ser105. A 2-[(2R,5Z)-2-carboxy-4-methylthiazol-5(2H)-ylidene]ethyl phosphate-binding site is contributed by 131–133; the sequence is TSS. Lys134 is a 4-amino-2-methyl-5-(diphosphooxymethyl)pyrimidine binding site. Gly162 contributes to the 2-[(2R,5Z)-2-carboxy-4-methylthiazol-5(2H)-ylidene]ethyl phosphate binding site.

Belongs to the thiamine-phosphate synthase family. The cofactor is Mg(2+).

The catalysed reaction is 2-[(2R,5Z)-2-carboxy-4-methylthiazol-5(2H)-ylidene]ethyl phosphate + 4-amino-2-methyl-5-(diphosphooxymethyl)pyrimidine + 2 H(+) = thiamine phosphate + CO2 + diphosphate. It catalyses the reaction 2-(2-carboxy-4-methylthiazol-5-yl)ethyl phosphate + 4-amino-2-methyl-5-(diphosphooxymethyl)pyrimidine + 2 H(+) = thiamine phosphate + CO2 + diphosphate. The enzyme catalyses 4-methyl-5-(2-phosphooxyethyl)-thiazole + 4-amino-2-methyl-5-(diphosphooxymethyl)pyrimidine + H(+) = thiamine phosphate + diphosphate. Its pathway is cofactor biosynthesis; thiamine diphosphate biosynthesis; thiamine phosphate from 4-amino-2-methyl-5-diphosphomethylpyrimidine and 4-methyl-5-(2-phosphoethyl)-thiazole: step 1/1. Its function is as follows. Condenses 4-methyl-5-(beta-hydroxyethyl)thiazole monophosphate (THZ-P) and 2-methyl-4-amino-5-hydroxymethyl pyrimidine pyrophosphate (HMP-PP) to form thiamine monophosphate (TMP). This Chlorobium limicola (strain DSM 245 / NBRC 103803 / 6330) protein is Thiamine-phosphate synthase.